The sequence spans 294 residues: Cytidine deaminase (294 aa).

CMP/dCMP-type deaminase domains follow at residues Asp-48 to Lys-168 and Leu-186 to Gly-294. Asn-89–Glu-91 contributes to the substrate binding site. Position 102 (His-102) interacts with Zn(2+). Glu-104 serves as the catalytic Proton donor. Cys-129 and Cys-132 together coordinate Zn(2+).

This sequence belongs to the cytidine and deoxycytidylate deaminase family. As to quaternary structure, homodimer. Requires Zn(2+) as cofactor.

The enzyme catalyses cytidine + H2O + H(+) = uridine + NH4(+). It carries out the reaction 2'-deoxycytidine + H2O + H(+) = 2'-deoxyuridine + NH4(+). Its function is as follows. This enzyme scavenges exogenous and endogenous cytidine and 2'-deoxycytidine for UMP synthesis. This is Cytidine deaminase from Citrobacter koseri (strain ATCC BAA-895 / CDC 4225-83 / SGSC4696).